The primary structure comprises 560 residues: Vanillyl-alcohol oxidase (560 aa).

The FAD-binding PCMH-type domain occupies 67-272; sequence DYFLASAIVA…TKIGIWLMPN (206 aa). Tyr108 is a catalytic residue. Position 422 is a tele-8alpha-FAD histidine (His422). Active-site residues include Tyr503 and Arg504.

To bacterial flavocytochrome p-cresol methyl hydroxylase. As to quaternary structure, homooctamer (tetramer of tightly interacting dimers). The cofactor is FAD.

The protein resides in the peroxisome. Its subcellular location is the cytoplasm. It catalyses the reaction 4-hydroxy-3-methoxy-benzenemethanol + O2 = vanillin + H2O2. With respect to regulation, competitively inhibited by cinnamyl and coniferyl alcohols and by isoeugenol. In terms of biological role, catalyzes the conversion of vanillin alcohol to vanillin, and also the conversion of a wide range of phenolic compounds bearing side chains of variable size at the para position of the aromatic ring. Crucial for the degradation of the secondary metabolites derived from the degradation of the lignin. Catalyzes besides the oxidation of 4-hydroxybenzyl alcohols, the oxidative deamination of 4-hydroxybenzylamines, the oxidative demethylation of 4-(methoxy-methyl)phenols and the oxidative hydration of 4-allylphenols. Most active with 4-allylphenols. The sequence is that of Vanillyl-alcohol oxidase (VAOA) from Penicillium simplicissimum.